A 211-amino-acid polypeptide reads, in one-letter code: Claudin-1 (211 aa).

Residues 1–7 (MANAGLQ) lie on the Cytoplasmic side of the membrane. A helical membrane pass occupies residues 8-28 (LLGFILASLGWIGSIVSTALP). The Extracellular segment spans residues 29-81 (QWKIYSYAGDNIVTAQAIYEGLWMSCVSQSTGQIQCKVFDSLLNLNSTLQATR). An intrachain disulfide couples cysteine 54 to cysteine 64. The helical transmembrane segment at 82–102 (ALMVIGILLGLIAIFVSTIGM) threads the bilayer. The Cytoplasmic segment spans residues 103-115 (KCMRCLEDDEVQK). Residues 116 to 136 (MWMAVIGGIIFVISGLATLVA) traverse the membrane as a helical segment. At 137-163 (TAWYGNRIVQEFYDPMTPVNARYEFGQ) the chain is on the extracellular side. A helical membrane pass occupies residues 164 to 184 (ALFTGWAAASLCLLGGALLSC). Topologically, residues 185–211 (SCPRKTTSYPTPRPYPKPTPSSGKDYV) are cytoplasmic. Positions 190-211 (TTSYPTPRPYPKPTPSSGKDYV) are disordered. Residues 210 to 211 (YV) form an interactions with TJP1, TJP2, TJP3 and PATJ region.

The protein belongs to the claudin family. As to quaternary structure, can form homo- and heteropolymers with other CLDN. Homopolymers interact with CLDN3, but not CLDN2, homopolymers. Directly interacts with TJP1/ZO-1, TJP2/ZO-2 and TJP3/ZO-3. Interacts with MPDZ and PATJ. Interacts with OCLN, CD81, CLDN4, CLDN6 and CLDN9. As to expression, detected in epididymis (at protein level). Detected in testis and epididymis.

The protein resides in the cell junction. The protein localises to the tight junction. It localises to the cell membrane. Its subcellular location is the basolateral cell membrane. Its function is as follows. Claudins function as major constituents of the tight junction complexes that regulate the permeability of epithelia. While some claudin family members play essential roles in the formation of impermeable barriers, others mediate the permeability to ions and small molecules. Often, several claudin family members are coexpressed and interact with each other, and this determines the overall permeability. CLDN1 is required to prevent the paracellular diffusion of small molecules through tight junctions in the epidermis and is required for the normal barrier function of the skin. Required for normal water homeostasis and to prevent excessive water loss through the skin, probably via an indirect effect on the expression levels of other proteins, since CLDN1 itself seems to be dispensable for water barrier formation in keratinocyte tight junctions. The chain is Claudin-1 (Cldn1) from Rattus norvegicus (Rat).